Here is a 1796-residue protein sequence, read N- to C-terminus: Y' element ATP-dependent helicase protein 1 copy 5 (1796 aa).

A disordered region spans residues 743-767 (AGEAASSDHDQKISRVTRKRPREPK). In terms of domain architecture, Helicase ATP-binding spans 797 to 974 (EIYMADTPSV…LQRIGLTGLA (178 aa)). 810–817 (APPGYGKT) lines the ATP pocket. The region spanning 1031 to 1180 (KLLLALFEIE…EFYGLESKKG (150 aa)) is the Helicase C-terminal domain. Disordered stretches follow at residues 1254–1278 (ANASTNATTNSSTNATTTASTNVRT) and 1294–1421 (TTES…DINK). The segment covering 1294–1397 (TTESTNSSTN…ATTTESTNAS (104 aa)) has biased composition (low complexity). Residues 1398–1421 (AKEDANKDGNAEDNRFHPVTDINK) show a composition bias toward basic and acidic residues.

It belongs to the helicase family. Yeast subtelomeric Y' repeat subfamily.

Catalyzes DNA unwinding and is involved in telomerase-independent telomere maintenance. This is Y' element ATP-dependent helicase protein 1 copy 5 (YRF1-5) from Saccharomyces cerevisiae (strain ATCC 204508 / S288c) (Baker's yeast).